A 248-amino-acid chain; its full sequence is Ureidoacrylate amidohydrolase RutB (248 aa).

The active-site Proton acceptor is the aspartate 41. The active site involves lysine 150. The active-site Nucleophile is cysteine 183.

It belongs to the isochorismatase family. RutB subfamily.

It carries out the reaction (Z)-3-ureidoacrylate + H2O + H(+) = (Z)-3-aminoacrylate + NH4(+) + CO2. The catalysed reaction is (Z)-3-ureidoacrylate + H2O = (Z)-3-aminoacrylate + carbamate + H(+). It catalyses the reaction (Z)-2-methylureidoacrylate + H2O + H(+) = (Z)-2-methylaminoacrylate + NH4(+) + CO2. Its function is as follows. Hydrolyzes ureidoacrylate to form aminoacrylate and carbamate. The carbamate hydrolyzes spontaneously, thereby releasing one of the nitrogen atoms of the pyrimidine ring as ammonia and one of its carbon atoms as CO2. This Methylorubrum extorquens (strain DSM 6343 / CIP 106787 / DM4) (Methylobacterium extorquens) protein is Ureidoacrylate amidohydrolase RutB.